Reading from the N-terminus, the 270-residue chain is Imidazoleglycerol-phosphate dehydratase 1, chloroplastic (270 aa).

The N-terminal 62 residues, 1 to 62, are a transit peptide targeting the chloroplast; that stretch reads MELSSASAIL…QSQLRQSISC (62 aa). Serine 63 is modified (N-acetylserine). Substrate is bound by residues glutamate 84, 110-118, 136-140, arginine 162, and arginine 184; these read HMLDQLASH and HHTNE. Mn(2+) is bound by residues histidine 110, histidine 136, histidine 137, and glutamate 140. Residues histidine 208, histidine 232, histidine 233, and glutamate 236 each contribute to the Mn(2+) site. Residues 232 to 240 and 262 to 264 contribute to the substrate site; these read HHIIEATFK and SSK. Positions 250–270 are disordered; the sequence is TETDPRRGGTIPSSKGVLSRS.

It belongs to the imidazoleglycerol-phosphate dehydratase family. The cofactor is Mn(2+).

The protein localises to the plastid. It localises to the chloroplast. It carries out the reaction D-erythro-1-(imidazol-4-yl)glycerol 3-phosphate = 3-(imidazol-4-yl)-2-oxopropyl phosphate + H2O. Its pathway is amino-acid biosynthesis; L-histidine biosynthesis; L-histidine from 5-phospho-alpha-D-ribose 1-diphosphate: step 6/9. This is Imidazoleglycerol-phosphate dehydratase 1, chloroplastic from Arabidopsis thaliana (Mouse-ear cress).